We begin with the raw amino-acid sequence, 100 residues long: Apolipoprotein C-II (100 aa).

Residues 1 to 22 form the signal peptide; sequence MGSRFLLALFLVLLVLGCEVQA. A lipid binding region spans residues 66-74; it reads SVDEKLRDM. The lipoprotein lipase cofactor stretch occupies residues 78-100; it reads SSAAMTTYASIFTDQIFTLLKGE.

It belongs to the apolipoprotein C2 family. In terms of processing, proapolipoprotein C-II is synthesized as a sialic acid containing glycoprotein which is subsequently desialylated prior to its proteolytic processing. Post-translationally, proapolipoprotein C-II, the major form found in plasma undergoes proteolytic cleavage of its N-terminal hexapeptide to generate the mature form apolipoprotein C-II, which occurs as the minor form in plasma.

It is found in the secreted. Functionally, component of chylomicrons, very low-density lipoproteins (VLDL), low-density lipoproteins (LDL), and high-density lipoproteins (HDL) in plasma. Plays an important role in lipoprotein metabolism as an activator of lipoprotein lipase. This is Apolipoprotein C-II (APOC2) from Bramus lutescens (Transcaucasian mole vole).